A 1074-amino-acid chain; its full sequence is DNA-directed RNA polymerase subunit beta (1074 aa).

The protein belongs to the RNA polymerase beta chain family. As to quaternary structure, in plastids the minimal PEP RNA polymerase catalytic core is composed of four subunits: alpha, beta, beta', and beta''. When a (nuclear-encoded) sigma factor is associated with the core the holoenzyme is formed, which can initiate transcription.

Its subcellular location is the plastid. It is found in the chloroplast. The catalysed reaction is RNA(n) + a ribonucleoside 5'-triphosphate = RNA(n+1) + diphosphate. In terms of biological role, DNA-dependent RNA polymerase catalyzes the transcription of DNA into RNA using the four ribonucleoside triphosphates as substrates. This chain is DNA-directed RNA polymerase subunit beta, found in Chara vulgaris (Common stonewort).